A 122-amino-acid chain; its full sequence is Fluoride-specific ion channel FluC (122 aa).

4 helical membrane-spanning segments follow: residues 1–21, 34–54, 60–80, and 100–120; these read MIGT…SRML, FPYG…LFFS, GVHI…FTTF, and FLNI…GFLI.

The protein belongs to the fluoride channel Fluc/FEX (TC 1.A.43) family.

Its subcellular location is the cell inner membrane. The catalysed reaction is fluoride(in) = fluoride(out). In terms of biological role, fluoride-specific ion channel. Important for reducing fluoride concentration in the cell, thus reducing its toxicity. This Campylobacter lari (strain RM2100 / D67 / ATCC BAA-1060) protein is Fluoride-specific ion channel FluC.